Here is a 228-residue protein sequence, read N- to C-terminus: 3,4-dihydroxy-2-butanone 4-phosphate synthase (228 aa).

D-ribulose 5-phosphate-binding positions include R37 to E38, D42, R150 to T154, and E174. A Mg(2+)-binding site is contributed by E38. Residue H153 participates in Mg(2+) binding.

It belongs to the DHBP synthase family. As to quaternary structure, homodimer. Requires Mg(2+) as cofactor. Mn(2+) is required as a cofactor.

It carries out the reaction D-ribulose 5-phosphate = (2S)-2-hydroxy-3-oxobutyl phosphate + formate + H(+). It functions in the pathway cofactor biosynthesis; riboflavin biosynthesis; 2-hydroxy-3-oxobutyl phosphate from D-ribulose 5-phosphate: step 1/1. Catalyzes the conversion of D-ribulose 5-phosphate to formate and 3,4-dihydroxy-2-butanone 4-phosphate. The polypeptide is 3,4-dihydroxy-2-butanone 4-phosphate synthase (Chloroherpeton thalassium (strain ATCC 35110 / GB-78)).